Consider the following 378-residue polypeptide: Anhydro-N-acetylmuramic acid kinase (378 aa).

Position 9–16 (9–16 (GTSADGID)) interacts with ATP.

This sequence belongs to the anhydro-N-acetylmuramic acid kinase family.

It carries out the reaction 1,6-anhydro-N-acetyl-beta-muramate + ATP + H2O = N-acetyl-D-muramate 6-phosphate + ADP + H(+). The protein operates within amino-sugar metabolism; 1,6-anhydro-N-acetylmuramate degradation. Its pathway is cell wall biogenesis; peptidoglycan recycling. Catalyzes the specific phosphorylation of 1,6-anhydro-N-acetylmuramic acid (anhMurNAc) with the simultaneous cleavage of the 1,6-anhydro ring, generating MurNAc-6-P. Is required for the utilization of anhMurNAc either imported from the medium or derived from its own cell wall murein, and thus plays a role in cell wall recycling. This chain is Anhydro-N-acetylmuramic acid kinase, found in Synechococcus elongatus (strain ATCC 33912 / PCC 7942 / FACHB-805) (Anacystis nidulans R2).